The following is a 157-amino-acid chain: MMSISPIVSLRRCDNEPSMPDEWRLYKLASRLRTFSNWPFTEDCACTPERMAEAGFVHCPTDNSPDVVKCFFCLKELEGWQPEDDPMDEHKKHSPSCLFIALKKKAEELTLSEFLKLDLEHTKIKMQKQMNLHIERFQAKANEVRGHLEKLDADETQ.

One copy of the BIR repeat lies at 31–101 (RLRTFSNWPF…KHSPSCLFIA (71 aa)). Threonine 47 is modified (phosphothreonine; by CDK1). Residues cysteine 70, cysteine 73, histidine 90, and cysteine 97 each contribute to the Zn(2+) site.

The protein belongs to the IAP family. As to quaternary structure, component of the CPC at least composed of survivin/birc5, incenp, cdca8/borealin and/or cdca9/dasra-A, and aurkb/aurora-B. Interacts directly with incenp (via N-terminus). Interacts with rxra; the interaction is stronger in the absence of 9-cis retinoic acids. Ubiquitination is required for centrosome-targeting. Highly expressed in vascular endothelial cells of tadpoles.

Its subcellular location is the cytoplasm. It localises to the nucleus. The protein resides in the chromosome. It is found in the centromere. The protein localises to the cytoskeleton. Its subcellular location is the spindle. In terms of biological role, component of the chromosomal passenger complex (CPC), a complex that acts as a key regulator of mitosis. The CPC complex has essential functions at the centromere in ensuring correct chromosome alignment and segregation and is required for chromatin-induced microtubule stabilization and spindle assembly. Does not appear to exhibit anti-apoptotic activity. Plays a role in increasing blood vessel size during development. This is Baculoviral IAP repeat-containing protein 5.2-A (birc5.2-a) from Xenopus laevis (African clawed frog).